Reading from the N-terminus, the 317-residue chain is Regulator of microtubule dynamics protein 1 (317 aa).

At K168 the chain carries N6-succinyllysine. 2 TPR repeats span residues 171-207 and 225-261; these read AICIGDVGDYEGIKAKIANAYIIKEHFEKAIELNPKD and PWYQRRIAKVLFATPPGSTYEEALGYFHRAEQVDPNF.

Belongs to the RMDN family. In terms of assembly, interacts with microtubules.

It localises to the cytoplasm. It is found in the cytoskeleton. Its subcellular location is the spindle. The protein resides in the spindle pole. The sequence is that of Regulator of microtubule dynamics protein 1 (RMDN1) from Bos taurus (Bovine).